A 306-amino-acid chain; its full sequence is Agmatinase (306 aa).

Residues His126, Asp149, His151, Asp153, Asp230, and Asp232 each coordinate Mn(2+).

Belongs to the arginase family. Agmatinase subfamily. Requires Mn(2+) as cofactor.

It carries out the reaction agmatine + H2O = urea + putrescine. The protein operates within amine and polyamine biosynthesis; putrescine biosynthesis via agmatine pathway; putrescine from agmatine: step 1/1. Its function is as follows. Catalyzes the formation of putrescine from agmatine. The polypeptide is Agmatinase (Escherichia coli O7:K1 (strain IAI39 / ExPEC)).